A 500-amino-acid polypeptide reads, in one-letter code: MAEIHDITGLLKPYLSGTNLVWTLLLVGYIIPKLFQYLQRLFSPVSRIPGSWLHKLTSLPLKIAIAKGESHIFTVDLHKKYGPIVTLSPTMISISDAREIKRIVHTEDWAKSEAVYGNFRQDPQRPTLLAFTDKKAYSQRKRLVSSMFGLRYIRSMQPLMRNCISVLMDELDKQCANGATAVDMQHMIQSLAADIIGVTTFGQTFDLVKNGSHPLPDRLKQALKLSGILQFMPWLTKIPFIPNRDPYVSWFTNEIVAKRRAQIASRQGPPREDLLQKMIEAADESPTSPFRVSDIQDESVVLLIAGSETTANAELFTLIHLLRHPSKLATLYEEIDRWYPRNDPRPTDCDYSMSGMVYLQACIDETMRLVPGQATGSPRESRKDETLLGYDIPKGTTVFPTTQEVHLDETLWPNATEFLPERWLDVYAKGEANSLPYYPFSAGSRVCIGKHFAAQEMHLSLVSLLRRFQFEYVSGQDESTVFRIAQQMRGHRYLMTVGRR.

The helical transmembrane segment at 13–32 threads the bilayer; it reads PYLSGTNLVWTLLLVGYIIP. N-linked (GlcNAc...) asparagine glycans are attached at residues asparagine 210 and asparagine 414. Residue cysteine 447 participates in heme binding.

It belongs to the cytochrome P450 family. Heme is required as a cofactor.

The protein resides in the membrane. Its pathway is secondary metabolite biosynthesis. In terms of biological role, cytochrome P450 monooxygenase; part of the cluster that mediates the biosynthesis of acurin A, a highly reduced polyketide coupled to a serine via a peptide bond. The activities of the highly reducing polyketide synthase acrA and the nonribosomal peptide synthetase acrB are collectively responsible for the synthesis of the acurin A core structure with a heptaketide backbone produced by acrA covalently fused to a L-serine by acrB. After the formation of the PK-NRP hybrid product, it is detached from acrB by reductive release to set up the formation of the lactam ring by aldol condensation. The hydrolyase acrC then catalyzes water loss to generate a double bond in the ring. This double bond is probably reduced, which is followed by three oxidations at C-22 to generate the carboxylic acid moiety, involving probably the FAD-binding monooxygenase acrE and the cytochrome P450 monooxygenases acrD and acrF. Finally, a last methylation step performed by the O-methyltransferase acrG leads to the production of acurin A. This chain is Cytochrome P450 monooxygenase acrD, found in Aspergillus aculeatus (strain ATCC 16872 / CBS 172.66 / WB 5094).